Reading from the N-terminus, the 402-residue chain is CinA-like protein (402 aa).

This sequence belongs to the CinA family.

The chain is CinA-like protein from Deinococcus deserti (strain DSM 17065 / CIP 109153 / LMG 22923 / VCD115).